The chain runs to 121 residues: Splicing factor 3B subunit 6 (121 aa).

The interval Glu12–Lys25 is interaction with pre-mRNA branch site. In terms of domain architecture, RRM spans Arg15–Ser90.

It belongs to the SF3B6 family. As to quaternary structure, component of splicing factor SF3B complex. Component of the U11/U12 snRNPs that are part of the U12-type spliceosome.

The protein localises to the nucleus. Involved in pre-mRNA splicing as a component of the splicing factor SF3B complex. SF3B complex is required for 'A' complex assembly formed by the stable binding of U2 snRNP to the branchpoint sequence (BPS) in pre-mRNA. Directly contacts the pre-mRNA branch site adenosine for the first catalytic step of splicing. Enters the spliceosome and associates with the pre-mRNA branch site as part of the 17S U2 or, in the case of the minor spliceosome, as part of the 18S U11/U12 snRNP complex, and thus may facilitate the interaction of these snRNP with the branch sites of U2 and U12 respectively. The protein is Splicing factor 3B subunit 6 of Drosophila melanogaster (Fruit fly).